The following is a 697-amino-acid chain: Potassium-transporting ATPase ATP-binding subunit (697 aa).

The next 4 membrane-spanning stretches (helical) occupy residues 55–75, 79–99, 245–265, and 271–291; these read PIMF…FLPS, SIPG…VLFA, LTLI…YLGF, and VLVA…LSAI. The 4-aspartylphosphate intermediate role is filled by aspartate 324. Residues aspartate 361, glutamate 365, 393–400, and lysine 412 contribute to the ATP site; that span reads FKAETRMS. Mg(2+)-binding residues include aspartate 535 and aspartate 539. A run of 3 helical transmembrane segments spans residues 605-625, 633-653, and 677-697; these read FAII…LNIM, AILS…PLAM, and GGVI…GLFI.

This sequence belongs to the cation transport ATPase (P-type) (TC 3.A.3) family. Type IA subfamily. In terms of assembly, the system is composed of three essential subunits: KdpA, KdpB and KdpC.

The protein localises to the cell membrane. The enzyme catalyses K(+)(out) + ATP + H2O = K(+)(in) + ADP + phosphate + H(+). Its function is as follows. Part of the high-affinity ATP-driven potassium transport (or Kdp) system, which catalyzes the hydrolysis of ATP coupled with the electrogenic transport of potassium into the cytoplasm. This subunit is responsible for energy coupling to the transport system and for the release of the potassium ions to the cytoplasm. The polypeptide is Potassium-transporting ATPase ATP-binding subunit (Bacillus cereus (strain ATCC 14579 / DSM 31 / CCUG 7414 / JCM 2152 / NBRC 15305 / NCIMB 9373 / NCTC 2599 / NRRL B-3711)).